The sequence spans 190 residues: UPF0149 protein NT01EI_3357 (190 aa).

It belongs to the UPF0149 family.

This Edwardsiella ictaluri (strain 93-146) protein is UPF0149 protein NT01EI_3357.